Reading from the N-terminus, the 135-residue chain is Holo-[acyl-carrier-protein] synthase (135 aa).

2 residues coordinate Mg(2+): Asp-7 and Glu-57.

The protein belongs to the P-Pant transferase superfamily. AcpS family. Mg(2+) is required as a cofactor.

It localises to the cytoplasm. It carries out the reaction apo-[ACP] + CoA = holo-[ACP] + adenosine 3',5'-bisphosphate + H(+). Functionally, transfers the 4'-phosphopantetheine moiety from coenzyme A to a Ser of acyl-carrier-protein. In Corynebacterium glutamicum (strain ATCC 13032 / DSM 20300 / JCM 1318 / BCRC 11384 / CCUG 27702 / LMG 3730 / NBRC 12168 / NCIMB 10025 / NRRL B-2784 / 534), this protein is Holo-[acyl-carrier-protein] synthase.